Consider the following 2171-residue polypeptide: DExH-box ATP-dependent RNA helicase DExH12 (2171 aa).

Disordered stretches follow at residues 24–80 (SLVL…KERD), 218–267 (EENE…NEGT), and 383–426 (TAKE…ESGW). Composition is skewed to basic and acidic residues over residues 31–40 (NRPRDTHEPT) and 50–80 (IDPRSFGDRVAKGRPQELEDKLKKSKKKERD). Positions 218–242 (EENEEDDEESDPDMVEEDDDEEDDE) are enriched in acidic residues. Residues 383–423 (TAKEREENLQKSINEEARRLKDETGGDGGRGRRDVADRDSE) show a composition bias toward basic and acidic residues. The region spanning 514–697 (DTALFKAENI…FLRVDLKKGL (184 aa)) is the Helicase ATP-binding 1 domain. 527-534 (APTGAGKT) contacts ATP. The DEIH box signature appears at 639 to 642 (DEIH). The Helicase C-terminal 1 domain maps to 731–941 (LCYQKVLAGA…GTVQNAREAC (211 aa)). Positions 1006–1308 (TDLGRIASYY…WLGSETVLPV (303 aa)) constitute an SEC63 1 domain. One can recognise a Helicase ATP-binding 2 domain in the interval 1360 to 1537 (TVLYNTNDNV…WIGASSHGLF (178 aa)). Residue 1373 to 1380 (APTGSGKT) participates in ATP binding. Positions 1479-1482 (DELH) match the DELH box motif. In terms of domain architecture, Helicase C-terminal 2 spans 1574-1779 (AIVQHAKNKK…GVIENKQDAV (206 aa)). The 319-residue stretch at 1839–2157 (PLNLGMIASY…LGCDQEYSFS (319 aa)) folds into the SEC63 2 domain.

This sequence belongs to the DExH box helicase family. In terms of assembly, interacts with CLO.

It is found in the nucleus. It catalyses the reaction ATP + H2O = ADP + phosphate + H(+). RNA helicase that plays an essential role in pre-mRNA splicing as component of the U5 snRNP and U4/U6-U5 tri-snRNP complexes. Involved in spliceosome assembly, activation and disassembly. This Arabidopsis thaliana (Mouse-ear cress) protein is DExH-box ATP-dependent RNA helicase DExH12.